Reading from the N-terminus, the 385-residue chain is Polyketide synthase 1 (385 aa).

Residue Cys-157 is part of the active site.

It belongs to the thiolase-like superfamily. Chalcone/stilbene synthases family. As to expression, expressed in glandular trichomes.

Its subcellular location is the cytoplasm. Polyketide synthase responsible for the biosynthesis of secondary metabolites. The sequence is that of Polyketide synthase 1 (PKSG1) from Cannabis sativa (Hemp).